The primary structure comprises 60 residues: Large ribosomal subunit protein uL30 (60 aa).

It belongs to the universal ribosomal protein uL30 family. As to quaternary structure, part of the 50S ribosomal subunit.

The chain is Large ribosomal subunit protein uL30 from Dechloromonas aromatica (strain RCB).